The following is a 122-amino-acid chain: Large ribosomal subunit protein uL14c (122 aa).

Belongs to the universal ribosomal protein uL14 family. As to quaternary structure, part of the 50S ribosomal subunit.

The protein localises to the plastid. Its subcellular location is the chloroplast. In terms of biological role, binds to 23S rRNA. The protein is Large ribosomal subunit protein uL14c of Phalaenopsis aphrodite subsp. formosana (Moth orchid).